Reading from the N-terminus, the 37-residue chain is MKVRASVKKMCEKCRVIRRRGRVMVICSNPKHKQRQG.

The protein belongs to the bacterial ribosomal protein bL36 family.

This chain is Large ribosomal subunit protein bL36, found in Rippkaea orientalis (strain PCC 8801 / RF-1) (Cyanothece sp. (strain PCC 8801)).